The primary structure comprises 286 residues: MVAFVKARRQIAGVKESKSLLPLALIGISLLYVGLIIIIPAANVAVQAFSEGLSGFIKNLGDRNLQEAIRLTLLMGVISVPLNTLFGLAAAFAIARKQFPGKSLLLSVIDLPFSISPVVAGLMIVLLYGRNGWLGPLLESNDIKIIFAWPGMALATIFVSMPFVAREVIPNLEEIGTDAEEAASTLGANGWQTFWRVTLPSIKWSMLYGVVLTTARALGEFGAVSVVSGSITGKTQTLPLFVEEAYKQYQTTLSYTAALLLGGISLVTLVLKALLEARTGRQSRIH.

6 helical membrane passes run 20–40 (LLPL…IIIP), 74–94 (LMGV…AFAI), 108–128 (VIDL…VLLY), 145–165 (IIFA…PFVA), 207–227 (LYGV…VSVV), and 255–275 (YTAA…KALL). Residues 69–272 (IRLTLLMGVI…GISLVTLVLK (204 aa)) form the ABC transmembrane type-1 domain.

Belongs to the binding-protein-dependent transport system permease family. CysTW subfamily. The complex is composed of two ATP-binding proteins (CysA), two transmembrane proteins (CysT and CysW) and a solute-binding protein (CysP).

It localises to the cell inner membrane. Its function is as follows. Part of the ABC transporter complex CysAWTP (TC 3.A.1.6.1) involved in sulfate/thiosulfate import. Probably responsible for the translocation of the substrate across the membrane. The protein is Sulfate transport system permease protein CysW (cysW) of Synechococcus elongatus (strain ATCC 33912 / PCC 7942 / FACHB-805) (Anacystis nidulans R2).